The chain runs to 226 residues: MQAQALLHLLQLSSPSLPIGAYSYSQGLEAAIENGTVKDEVGARRWIIDVLHEVVARFEAPVLWRLLQAFETRDAAAVESWTERFIAARDTAEFRAETIQMGYSLGKLCSDLQLGDAEMLALLQAQTEVPLPTALAYAAVTLKVPAEAALLGMLFSWAENQVLVCVKSVPLGQVAGQRLLLSLQAELEVAAQVAQQLPDEELSNWSPGLSLLSMQHEVQYSRLYRS.

The protein belongs to the UreF family. As to quaternary structure, ureD, UreF and UreG form a complex that acts as a GTP-hydrolysis-dependent molecular chaperone, activating the urease apoprotein by helping to assemble the nickel containing metallocenter of UreC. The UreE protein probably delivers the nickel.

The protein localises to the cytoplasm. In terms of biological role, required for maturation of urease via the functional incorporation of the urease nickel metallocenter. This is Urease accessory protein UreF from Janthinobacterium sp. (strain Marseille) (Minibacterium massiliensis).